The chain runs to 154 residues: Transcriptional repressor NrdR (154 aa).

A zinc finger spans residues 3–34; it reads CPTCQYNGTRVVDSRPADDGNSIRRRRECEKC. An ATP-cone domain is found at 49–139; it reads LIVVKKDGAR…VYRQFKDISV (91 aa).

It belongs to the NrdR family. Zn(2+) serves as cofactor.

Negatively regulates transcription of bacterial ribonucleotide reductase nrd genes and operons by binding to NrdR-boxes. The sequence is that of Transcriptional repressor NrdR from Listeria monocytogenes serotype 4a (strain HCC23).